Here is a 109-residue protein sequence, read N- to C-terminus: Cell division protein ZapA (109 aa).

Residues 21–99 (PEQRDALNQA…IEQALLEQGR (79 aa)) adopt a coiled-coil conformation.

It belongs to the ZapA family. Type 1 subfamily. In terms of assembly, homodimer. Interacts with FtsZ.

The protein localises to the cytoplasm. Activator of cell division through the inhibition of FtsZ GTPase activity, therefore promoting FtsZ assembly into bundles of protofilaments necessary for the formation of the division Z ring. It is recruited early at mid-cell but it is not essential for cell division. The protein is Cell division protein ZapA of Klebsiella pneumoniae subsp. pneumoniae (strain ATCC 700721 / MGH 78578).